The sequence spans 266 residues: bZIP transcription factor 12 (266 aa).

A bZIP domain is found at 184–248; it reads AMQRQKRMIK…KELKEMVVPV (65 aa). A basic motif region spans residues 187–205; the sequence is RQKRMIKNRESAARSRERK. A coiled-coil region spans residues 202–244; that stretch reads RERKQAYIAELESLVTQLEEENAKMFKEQEEQHQKRLKELKEM. Positions 212 to 219 are leucine-zipper; it reads LESLVTQL.

The protein resides in the nucleus. Functionally, transcription activator that binds to the ABA-responsive elements (ABREs) in vitro. Involved in abiotic stress responses and abscisic acid (ABA) signaling. Involved in the signaling pathway that induces growth inhibition in response to D-allose. This chain is bZIP transcription factor 12, found in Oryza sativa subsp. japonica (Rice).